The primary structure comprises 87 residues: Small ribosomal subunit protein bS16 (87 aa).

This sequence belongs to the bacterial ribosomal protein bS16 family.

The chain is Small ribosomal subunit protein bS16 from Ehrlichia ruminantium (strain Welgevonden).